A 588-amino-acid polypeptide reads, in one-letter code: Aspartate--tRNA ligase (588 aa).

Position 174 (E174) interacts with L-aspartate. The segment at Q198–K201 is aspartate. Residue R220 coordinates L-aspartate. ATP is bound by residues R220–E222 and Q229. H448 serves as a coordination point for L-aspartate. An ATP-binding site is contributed by E482. R489 is an L-aspartate binding site. G534–R537 provides a ligand contact to ATP.

It belongs to the class-II aminoacyl-tRNA synthetase family. Type 1 subfamily. In terms of assembly, homodimer.

Its subcellular location is the cytoplasm. The catalysed reaction is tRNA(Asp) + L-aspartate + ATP = L-aspartyl-tRNA(Asp) + AMP + diphosphate. Catalyzes the attachment of L-aspartate to tRNA(Asp) in a two-step reaction: L-aspartate is first activated by ATP to form Asp-AMP and then transferred to the acceptor end of tRNA(Asp). The chain is Aspartate--tRNA ligase from Xanthomonas euvesicatoria pv. vesicatoria (strain 85-10) (Xanthomonas campestris pv. vesicatoria).